A 46-amino-acid polypeptide reads, in one-letter code: Crambin (46 aa).

3 cysteine pairs are disulfide-bonded: cysteine 3-cysteine 40, cysteine 4-cysteine 32, and cysteine 16-cysteine 26.

Belongs to the plant thionin (TC 1.C.44) family.

The protein localises to the secreted. Functionally, the function of this hydrophobic plant seed protein is not known. The polypeptide is Crambin (THI2) (Crambe hispanica subsp. abyssinica (Abyssinian kale)).